A 346-amino-acid polypeptide reads, in one-letter code: MVGGGGKRRPGGEGPQCEKTTDVKKSKFCEADVSSDLRKEVENHYKLSLPEDFYHFWKFCEELDPEKPSDSLSASLGLQLVGPYDILAGKHKTKKKSTGLNFNLHWRFYYDPPEFQTIIIGDNKTQYHMGYFRDSPDEFPVYVGINEAKKNCIIVPNGDNVFAAVKLFLTKKLREITDKKKINLLKNIDEKLTEAARELGYSLEQRTVKMKQRDKKVVTKTFHGAGLVVPVDKNDVGYRELPETDADLKRICKTIVEAASDEERLKAFAPIQEMMTFVQFANDECDYGMGLELGMDLFCYGSHYFHKVAGQLLPLAYNLLKRNLFAEIIEEHLANRSQENIDQLAA.

Position 1 is an N-acetylmethionine (methionine 1). The interval 1-23 is disordered; it reads MVGGGGKRRPGGEGPQCEKTTDV. N6-acetyllysine is present on lysine 19. The residue at position 97 (serine 97) is an ADP-ribosylserine. Lysine 186 and lysine 233 each carry N6-acetyllysine. At aspartate 235 the chain carries PolyADP-ribosyl aspartic acid. The residue at position 238 (tyrosine 238) is an ADP-ribosyltyrosine. The residue at position 240 (glutamate 240) is a PolyADP-ribosyl glutamic acid. Residues 242–346 are interaction with PARP1; it reads PETDADLKRI…SQENIDQLAA (105 aa). Glutamate 284 (proton donor) is an active-site residue.

The protein belongs to the HPF1 family. Interacts with PARP1 (via the PARP catalytic domain). Interacts with PARP2 (via the PARP catalytic domain). Interacts with core nucleosomes in a PARP1- and PARP2-dependent manner.

Its subcellular location is the chromosome. It localises to the nucleus. Functionally, cofactor for serine ADP-ribosylation that confers serine specificity on PARP1 and PARP2 and plays a key role in DNA damage response. Initiates the repair of double-strand DNA breaks: recruited to DNA damage sites by PARP1 and PARP2 and switches the amino acid specificity of PARP1 and PARP2 from aspartate or glutamate to serine residues, licensing serine ADP-ribosylation of target proteins. Serine ADP-ribosylation of target proteins, such as histones, promotes decompaction of chromatin and the recruitment of repair factors leading to the reparation of DNA strand breaks. Serine ADP-ribosylation of proteins constitutes the primary form of ADP-ribosylation of proteins in response to DNA damage. HPF1 acts by completing the active site of PARP1 and PARP2: forms a composite active site composed of residues from HPF1 and PARP1 or PARP2. While HPF1 promotes the initiation of serine ADP-ribosylation, it restricts the polymerase activity of PARP1 and PARP2 in order to limit the length of poly-ADP-ribose chains. HPF1 also promotes tyrosine ADP-ribosylation, probably by conferring tyrosine specificity on PARP1. This is Histone PARylation factor 1 from Homo sapiens (Human).